Consider the following 142-residue polypeptide: Small ribosomal subunit protein uS12 (142 aa).

Belongs to the universal ribosomal protein uS12 family. Part of the 30S ribosomal subunit.

Its function is as follows. With S4 and S5 plays an important role in translational accuracy. Located at the interface of the 30S and 50S subunits. This chain is Small ribosomal subunit protein uS12, found in Methanosarcina mazei (strain ATCC BAA-159 / DSM 3647 / Goe1 / Go1 / JCM 11833 / OCM 88) (Methanosarcina frisia).